A 218-amino-acid chain; its full sequence is Protein Syd (218 aa).

The protein belongs to the Syd family.

The protein resides in the cell inner membrane. In terms of biological role, interacts with the SecY protein in vivo. May bind preferentially to an uncomplexed state of SecY, thus functioning either as a chelating agent for excess SecY in the cell or as a regulatory factor that negatively controls the translocase function. In Shewanella denitrificans (strain OS217 / ATCC BAA-1090 / DSM 15013), this protein is Protein Syd.